The primary structure comprises 157 residues: uncharacterized protein (157 aa).

This sequence to E.coli YcjD and H.influenzae HI_0925.

This is an uncharacterized protein from Haemophilus influenzae (strain ATCC 51907 / DSM 11121 / KW20 / Rd).